A 64-amino-acid polypeptide reads, in one-letter code: Alpha-conotoxin-like Ac1.1b (64 aa).

Positions 1 to 21 (MGMRMMFTLFLLVVLTTTVVS) are cleaved as a signal peptide. Positions 22 to 47 (FPSDSASDGRDDEAKDERSDMYKSKR) are excised as a propeptide. The disordered stretch occupies residues 23–46 (PSDSASDGRDDEAKDERSDMYKSK). The segment covering 28–44 (SDGRDDEAKDERSDMYK) has biased composition (basic and acidic residues). Intrachain disulfides connect Cys51/Cys56 and Cys52/Cys62. Cys62 carries the post-translational modification Cysteine amide.

This sequence belongs to the conotoxin A superfamily. Expressed by the venom duct.

The protein localises to the secreted. In terms of biological role, alpha-conotoxins act on postsynaptic membranes, they bind to the nicotinic acetylcholine receptors (nAChR) and thus inhibit them. This Conus achatinus (Little frog cone) protein is Alpha-conotoxin-like Ac1.1b.